The following is a 106-amino-acid chain: Thiosulfate sulfurtransferase GlpE (106 aa).

Positions 17–105 constitute a Rhodanese domain; it reads EQKQAHLVDI…WHRANLPIEA (89 aa). Cysteine 65 serves as the catalytic Cysteine persulfide intermediate.

Belongs to the GlpE family.

It is found in the cytoplasm. The catalysed reaction is thiosulfate + hydrogen cyanide = thiocyanate + sulfite + 2 H(+). It catalyses the reaction thiosulfate + [thioredoxin]-dithiol = [thioredoxin]-disulfide + hydrogen sulfide + sulfite + 2 H(+). In terms of biological role, transferase that catalyzes the transfer of sulfur from thiosulfate to thiophilic acceptors such as cyanide or dithiols. May function in a CysM-independent thiosulfate assimilation pathway by catalyzing the conversion of thiosulfate to sulfite, which can then be used for L-cysteine biosynthesis. In Vibrio cholerae serotype O1 (strain ATCC 39541 / Classical Ogawa 395 / O395), this protein is Thiosulfate sulfurtransferase GlpE.